We begin with the raw amino-acid sequence, 90 residues long: Mitochondrial import inner membrane translocase subunit Tim10 (90 aa).

The Twin CX3C motif motif lies at 37-62; the sequence is CHSKCINKSYGDSDITKQEALCLDRC. Intrachain disulfides connect C37–C62 and C41–C58.

Belongs to the small Tim family. Heterohexamer; composed of 3 copies of TIM9 and 3 copies of TIM10, named soluble 70 kDa complex. Associates directly with the TIM22 complex, whose core is composed of TIM22 and TIM54. Interacts with the transmembrane regions of multi-pass transmembrane proteins in transit.

The protein localises to the mitochondrion inner membrane. Functionally, mitochondrial intermembrane chaperone that participates in the import and insertion of multi-pass transmembrane proteins into the mitochondrial inner membrane. Also required for the transfer of beta-barrel precursors from the TOM complex to the sorting and assembly machinery (SAM complex) of the outer membrane. Acts as a chaperone-like protein that protects the hydrophobic precursors from aggregation and guide them through the mitochondrial intermembrane space. The protein is Mitochondrial import inner membrane translocase subunit Tim10 (TIM10) of Pichia sorbitophila (strain ATCC MYA-4447 / BCRC 22081 / CBS 7064 / NBRC 10061 / NRRL Y-12695) (Hybrid yeast).